Reading from the N-terminus, the 473-residue chain is 23S rRNA (uracil(1939)-C(5))-methyltransferase RlmD (473 aa).

A disordered region spans residues 6 to 27; sequence KPSKGKNKSNVKGRVRGAGSGE. Residues 8 to 20 show a composition bias toward basic residues; the sequence is SKGKNKSNVKGRV. The TRAM domain occupies 42 to 99; sequence DDINAANEAVTIDGMDWQGQGVARGDTLYFVDGALPGETVEIKALSSNKQIVNAKVTK. Cysteine 112, cysteine 118, cysteine 121, and cysteine 199 together coordinate [4Fe-4S] cluster. The S-adenosyl-L-methionine site is built by glutamine 304, phenylalanine 333, asparagine 338, glutamate 354, aspartate 381, and aspartate 402. Catalysis depends on cysteine 428, which acts as the Nucleophile.

The protein belongs to the class I-like SAM-binding methyltransferase superfamily. RNA M5U methyltransferase family. RlmD subfamily.

The enzyme catalyses uridine(1939) in 23S rRNA + S-adenosyl-L-methionine = 5-methyluridine(1939) in 23S rRNA + S-adenosyl-L-homocysteine + H(+). Functionally, catalyzes the formation of 5-methyl-uridine at position 1939 (m5U1939) in 23S rRNA. The protein is 23S rRNA (uracil(1939)-C(5))-methyltransferase RlmD of Alteromonas naphthalenivorans.